We begin with the raw amino-acid sequence, 266 residues long: Protein PAE0875 (266 aa).

The protein belongs to the CinA family.

This Pyrobaculum aerophilum (strain ATCC 51768 / DSM 7523 / JCM 9630 / CIP 104966 / NBRC 100827 / IM2) protein is Protein PAE0875.